We begin with the raw amino-acid sequence, 236 residues long: Transmembrane protein 70 homolog, mitochondrial (236 aa).

A mitochondrion-targeting transit peptide spans 1–64; sequence MLGLRAMLPK…WLSVKSTKTE (64 aa). 2 helical membrane passes run 83–103 and 116–136; these read MVKF…PILL and VFLC…LHFI.

It belongs to the TMEM70 family. As to quaternary structure, associates with mitochondrial complex I assembly intermediates during its biogenesis.

The protein resides in the mitochondrion membrane. In terms of biological role, scaffold protein that participates in the c-ring assembly of mitochondrial ATP synthase (F(1)F(0) ATP synthase or complex V). Also binds the mitochondrial proton-transporting ATP synthase complex I and may play a role in the stability of its membrane-bound subassemblies. This chain is Transmembrane protein 70 homolog, mitochondrial, found in Drosophila melanogaster (Fruit fly).